Reading from the N-terminus, the 558-residue chain is Solute carrier family 22 member 6-A (558 aa).

Over 1–15 (MSFAELLERTGGMGR) the chain is Cytoplasmic. Residues 16–36 (FQITQVALMCFPILLMASHNL) traverse the membrane as a helical segment. At 37–140 (LQNFSAAIPD…LVCGHKNRRQ (104 aa)) the chain is on the extracellular side. A helical transmembrane segment spans residues 141-161 (LAQSVYMGGVLVGAIILGGLS). At 162 to 167 (DRYGRR) the chain is on the cytoplasmic side. Residues 168–188 (ALLIWSYFQMAVSGLCSAFSP) traverse the membrane as a helical segment. At 189 to 197 (NYLSYCIFR) the chain is on the extracellular side. Residues 198–218 (FLTGMALSGIGLNTTALIVEW) form a helical membrane-spanning segment. Over 219 to 225 (VPTRVRT) the chain is Cytoplasmic. The chain crosses the membrane as a helical span at residues 226-246 (ITGTLAGFSYTVGQLLLAGLA). The Extracellular portion of the chain corresponds to 247–253 (YAMRDWR). Residues 254-274 (WLQLCVSLPFFIFFLYSWWFP) form a helical membrane-spanning segment. The Cytoplasmic portion of the chain corresponds to 275-342 (ESARWLVLSG…DLIRTSTIRR (68 aa)). A helical membrane pass occupies residues 343 to 363 (ISCALSLVWFSTSFAYYGLAM). Topologically, residues 364–369 (DLQNFN) are extracellular. Residues 370–390 (VSIYLIQVIFGAVDFPAKIFS) form a helical membrane-spanning segment. At 391–400 (TTAMIYVGRK) the chain is on the cytoplasmic side. The helical transmembrane segment at 401 to 421 (FTQLMSLILGGVVILANSFVP) threads the bilayer. Over 422-428 (HEMQTVR) the chain is Extracellular. A helical transmembrane segment spans residues 429–449 (TGMAVFGKGCLAASFSCVFLY). Topologically, residues 450 to 462 (TTELYPTVIRQSG) are cytoplasmic. The helical transmembrane segment at 463-483 (LGLCSTMARIGGIVAPLVKIL) threads the bilayer. Over 484-488 (GEYYP) the chain is Extracellular. The chain crosses the membrane as a helical span at residues 489–509 (FLPLVIYGGAPIISGLCVFFL). Residues 510-558 (PETVNKPLPDTIEEVEKRIKAPKKENEMNEIVSLKKKEGMKENPVNDVL) are Cytoplasmic-facing. Positions 539-550 (EIVSLKKKEGMK) are enriched in basic and acidic residues. The segment at 539-558 (EIVSLKKKEGMKENPVNDVL) is disordered.

Belongs to the major facilitator (TC 2.A.1) superfamily. Organic cation transporter (TC 2.A.1.19) family. In terms of processing, glycosylated. Glycosylation is necessary for proper targeting of the transporter to the plasma membrane.

The protein localises to the cell membrane. The protein resides in the basolateral cell membrane. It is found in the basal cell membrane. Functionally, involved in the renal elimination of endogenous and exogenous organic anions. Mediates the sodium-independent uptake of p-aminohippurate (PAH), 2,3-dimercapto-1-propanesulfonic acid (DMPS), cidofovir, adefovir, 9-(2-phosphonylmethoxyethyl) guanine (PMEG), 9-(2-phosphonylmethoxyethyl) diaminopurine (PMEDAP), ochratoxin (OTA), acyclovir (ACV), 3'-azido-3-'deoxythymidine (AZT), cimetidine (CMD), 2,4-dichloro-phenoxyacetate (2,4-D), hippurate (HA), indoleacetate (IA), indoxyl sulfate (IS) and 3-carboxy-4-methyl-5-propyl-2-furanpropionate (CMPF) and edaravone sulfate. PAH uptake is inhibited by p-chloromercuribenzenesulphonate (PCMBS), diethyl pyrocarbonate (DEPC), indomethacin, sulindac, diclofenac, carprofen, okadaic acid, benzothiazolylcysteine (BTC), S-chlorotrifluoroethylcysteine (CTFC), cysteine S-conjugates S-dichlorovinylcysteine (DCVC), furosemide, steviol, phorbol 12-myristate 13-acetate (PMA), calcium ionophore A23187, benzylpenicillin, bumetamide, losartan, probenecid, phenol red, urate, glutarate and alpha-ketoglutarate. In Xenopus laevis (African clawed frog), this protein is Solute carrier family 22 member 6-A (slc22a6-a).